A 24-amino-acid polypeptide reads, in one-letter code: 33.0 kDa cold shock protein (24 aa).

The protein belongs to the thaumatin family. Homooligomer; disulfide-linked. Post-translationally, glycosylated.

Its subcellular location is the secreted. The protein resides in the extracellular space. The protein localises to the apoplast. The protein is 33.0 kDa cold shock protein of Arachis hypogaea (Peanut).